The primary structure comprises 239 residues: Glucosamine-6-phosphate deaminase (239 aa).

D62 acts as the Proton acceptor; for enolization step in catalysis. N128 serves as the catalytic For ring-opening step. H130 (proton acceptor; for ring-opening step) is an active-site residue. The active-site For ring-opening step is the E135.

Belongs to the glucosamine/galactosamine-6-phosphate isomerase family. NagB subfamily.

It carries out the reaction alpha-D-glucosamine 6-phosphate + H2O = beta-D-fructose 6-phosphate + NH4(+). The protein operates within amino-sugar metabolism; N-acetylneuraminate degradation; D-fructose 6-phosphate from N-acetylneuraminate: step 5/5. Its function is as follows. Catalyzes the reversible isomerization-deamination of glucosamine 6-phosphate (GlcN6P) to form fructose 6-phosphate (Fru6P) and ammonium ion. The sequence is that of Glucosamine-6-phosphate deaminase from Lactobacillus johnsonii (strain CNCM I-12250 / La1 / NCC 533).